The chain runs to 557 residues: Hepatocyte nuclear factor 1-beta (557 aa).

The dimerization stretch occupies residues M1–E31. The HNF-p1 domain maps to M1–E32. Phosphoserine is present on residues S49, S52, S75, and S80. The tract at residues T64–D85 is disordered. In terms of domain architecture, POU-specific atypical spans K93–Q188. A DNA-binding region (homeobox; HNF1-type) is located at residues M231–Q311. Residues H324–G370 are disordered. Positions P328–P344 are enriched in low complexity. A compositionally biased stretch (polar residues) spans R351–G370.

This sequence belongs to the HNF1 homeobox family. In terms of assembly, binds DNA as a dimer. Can form homodimer or heterodimer with HNF1-alpha. Interacts (via HNF-p1 domain) with PCBD1; the interaction increases its transactivation activity.

It localises to the nucleus. Its function is as follows. Transcription factor that binds to the inverted palindrome 5'-GTTAATNATTAAC-3'. Binds to the FPC element in the cAMP regulatory unit of the PLAU gene. Transcriptional activity is increased by coactivator PCBD1. In Pongo abelii (Sumatran orangutan), this protein is Hepatocyte nuclear factor 1-beta (HNF1B).